A 263-amino-acid chain; its full sequence is MNIISESLRSHPNSCALIPFITAGYPDINTTIQALYELDSQGADIIELGIPYSDALADGSVIQHSSLIALQGGTYIDQVLHILEVVSTKLNTPIIILPYYNPILKRGIEKFIKQISLMGAKGLIVPDLPLEETDELIVICNDNQIELVLFVAPTSSMKRINSISKKSPGCIYLVSSTGVTGVRDDIDIKVMELSNYIKKVSNKFIMLGFGISTPEHIKKIMKWNIDGVVVGSAFVKKLSALKIDDRISSISSLCKSLKKATIL.

Active-site proton acceptor residues include glutamate 47 and aspartate 58.

It belongs to the TrpA family. Tetramer of two alpha and two beta chains.

It localises to the plastid. The protein resides in the chloroplast. It catalyses the reaction (1S,2R)-1-C-(indol-3-yl)glycerol 3-phosphate + L-serine = D-glyceraldehyde 3-phosphate + L-tryptophan + H2O. It functions in the pathway amino-acid biosynthesis; L-tryptophan biosynthesis; L-tryptophan from chorismate: step 5/5. The alpha subunit is responsible for the aldol cleavage of indoleglycerol phosphate to indole and glyceraldehyde 3-phosphate. This Antithamnion sp. (Red alga) protein is Tryptophan synthase alpha chain.